Reading from the N-terminus, the 298-residue chain is MEFENIISAADKARILAEALPYIRRFSGSVAVIKYGGNAMTEPALKEGFARDVVLLKLVGIHPVIVHGGGPQINAMLEKVGKKGEFVQGMRVTDKETMDIVEMVLGGHVNKEIVSMINTYGGHAVGVSGRDDHFIKAKKLLVDTPEQNSVDIGQVGTVESIDTGLVKGLIERGCIPVVAPVGVGEKGEAFNINADLVAGKLAEELNAEKLLMMTNIAGVMDKTGNLLTKLTPKRIDGLIADGTLYGGMLPKIASAVEAAVNGVKATHIIDGRLPNALLLEIFTDAGIGSMILGRGEDA.

Substrate contacts are provided by residues 69–70 (GG), arginine 91, and asparagine 191.

The protein belongs to the acetylglutamate kinase family. ArgB subfamily.

It localises to the cytoplasm. It catalyses the reaction N-acetyl-L-glutamate + ATP = N-acetyl-L-glutamyl 5-phosphate + ADP. It functions in the pathway amino-acid biosynthesis; L-arginine biosynthesis; N(2)-acetyl-L-ornithine from L-glutamate: step 2/4. Functionally, catalyzes the ATP-dependent phosphorylation of N-acetyl-L-glutamate. This Neisseria gonorrhoeae (strain ATCC 700825 / FA 1090) protein is Acetylglutamate kinase.